The chain runs to 304 residues: Plasmodesmata-located protein 3 (304 aa).

The N-terminal stretch at methionine 1–alanine 26 is a signal peptide. At lysine 27–threonine 272 the chain is on the extracellular side. 2 consecutive Gnk2-homologous domains span residues threonine 34–phenylalanine 138 and glycine 143–asparagine 242. 6 cysteine pairs are disulfide-bonded: cysteine 41-cysteine 116, cysteine 92-cysteine 101, cysteine 104-cysteine 129, cysteine 151-cysteine 220, cysteine 196-cysteine 205, and cysteine 208-cysteine 233. A helical membrane pass occupies residues valine 273–valine 293. The interval valine 273 to valine 293 is necessary and sufficient for plasmodesmal targeting. Residues lysine 294 to tyrosine 304 are Cytoplasmic-facing.

Belongs to the cysteine-rich repeat secretory protein family. Plasmodesmata-located proteins (PDLD) subfamily. As to quaternary structure, (Microbial infection) Interacts with Grapevine fanleaf virus (GFLV) 2B-MP. In terms of tissue distribution, highly expressed in inflorescence pedacel and shoot apex. Expressed in the outermost L1 layer of the shoot apical meristem and in the epidermis of bulging floral primordia. Within the L1, expression was restricted to the peripheral zone (at protein level).

It localises to the cell membrane. The protein localises to the cell junction. Its subcellular location is the plasmodesma. Functionally, modulates cell-to-cell trafficking. The polypeptide is Plasmodesmata-located protein 3 (Arabidopsis thaliana (Mouse-ear cress)).